Consider the following 151-residue polypeptide: Ribosome maturation factor RimP (151 aa).

This sequence belongs to the RimP family.

The protein localises to the cytoplasm. Functionally, required for maturation of 30S ribosomal subunits. This chain is Ribosome maturation factor RimP, found in Shewanella halifaxensis (strain HAW-EB4).